Reading from the N-terminus, the 595-residue chain is Methionine--tRNA ligase (595 aa).

Positions 11–21 (PYANGPRHIGH) match the 'HIGH' region motif. Zn(2+) contacts are provided by cysteine 143, cysteine 146, cysteine 156, and cysteine 159. The 'KMSKS' region signature appears at 350–354 (KFSSS). Serine 353 contributes to the ATP binding site.

It belongs to the class-I aminoacyl-tRNA synthetase family. MetG type 1 subfamily. As to quaternary structure, monomer. Zn(2+) serves as cofactor.

It localises to the cytoplasm. It carries out the reaction tRNA(Met) + L-methionine + ATP = L-methionyl-tRNA(Met) + AMP + diphosphate. Functionally, is required not only for elongation of protein synthesis but also for the initiation of all mRNA translation through initiator tRNA(fMet) aminoacylation. This Nocardioides sp. (strain ATCC BAA-499 / JS614) protein is Methionine--tRNA ligase.